The sequence spans 252 residues: Aspartate/glutamate leucyltransferase (252 aa).

Belongs to the R-transferase family. Bpt subfamily.

It localises to the cytoplasm. It carries out the reaction N-terminal L-glutamyl-[protein] + L-leucyl-tRNA(Leu) = N-terminal L-leucyl-L-glutamyl-[protein] + tRNA(Leu) + H(+). The catalysed reaction is N-terminal L-aspartyl-[protein] + L-leucyl-tRNA(Leu) = N-terminal L-leucyl-L-aspartyl-[protein] + tRNA(Leu) + H(+). Functionally, functions in the N-end rule pathway of protein degradation where it conjugates Leu from its aminoacyl-tRNA to the N-termini of proteins containing an N-terminal aspartate or glutamate. The protein is Aspartate/glutamate leucyltransferase of Afipia carboxidovorans (strain ATCC 49405 / DSM 1227 / KCTC 32145 / OM5) (Oligotropha carboxidovorans).